Consider the following 68-residue polypeptide: Serine palmitoyltransferase small subunit A (68 aa).

Over 1-9 (MALARAWKQ) the chain is Cytoplasmic. A helical transmembrane segment spans residues 10 to 26 (MSWFYYQYLLVTALYML). At 27 to 31 (EPWER) the chain is on the lumenal side. The chain crosses the membrane as a helical span at residues 32 to 54 (TVFNSMLVSIVGMALYTGYVFMP). Residues 55–68 (QHIMAILHYFEIVQ) lie on the Cytoplasmic side of the membrane.

Belongs to the SPTSS family. SPTSSA subfamily. As to quaternary structure, component of the serine palmitoyltransferase (SPT) complex, which is composed of SPTLC1, SPTLC2 or SPTLC3 and SPTSSA or SPTSSB. The heterodimer consisting of SPTLC1 and SPTLC2/SPTLC3 forms the catalytic core of the enzyme, while SPTSSA or SPTSSB subunits determine substrate specificity. SPT also interacts with ORMDL proteins, especially ORMDL3, which negatively regulate SPT activity in the presence of ceramides. Interacts with MBOAT7; the interaction plays a role in MBOAT7 localization to mitochondria-associated membranes.

The protein resides in the endoplasmic reticulum membrane. Its pathway is lipid metabolism; sphingolipid metabolism. Component of the serine palmitoyltransferase multisubunit enzyme (SPT) that catalyzes the initial and rate-limiting step in sphingolipid biosynthesis by condensing L-serine and activated acyl-CoA (most commonly palmitoyl-CoA) to form long-chain bases. The SPT complex is composed of SPTLC1, SPTLC2 or SPTLC3 and SPTSSA or SPTSSB. Within this complex, the heterodimer consisting of SPTLC1 and SPTLC2/SPTLC3 forms the catalytic core. Within the SPT complex, SPTSSA stimulates the catalytic activity and plays a role in substrate specificity, which depends upon the overall complex composition. The SPTLC1-SPTLC2-SPTSSA complex shows a strong preference for C16-CoA substrate, while the SPTLC1-SPTLC3-SPTSSA isozyme uses both C14-CoA and C16-CoA as substrates, with a slight preference for C14-CoA. Independently of its action as a SPT component, may be involved in MBOAT7 localization to mitochondria-associated membranes, a membrane bridge between the endoplasmic reticulum and mitochondria, may hence affect MBOAT7-catalyzed incorporation of arachidonic acid into phosphatidylinositol. This is Serine palmitoyltransferase small subunit A (SPTSSA) from Bos taurus (Bovine).